Here is a 372-residue protein sequence, read N- to C-terminus: Glutamate 5-kinase (372 aa).

An ATP-binding site is contributed by Lys14. Substrate-binding residues include Ser54, Asp141, and Asn153. 173 to 174 (TD) lines the ATP pocket. In terms of domain architecture, PUA spans 280–358 (RGHVVIDAGA…GEIEIVLGYM (79 aa)).

This sequence belongs to the glutamate 5-kinase family.

Its subcellular location is the cytoplasm. It catalyses the reaction L-glutamate + ATP = L-glutamyl 5-phosphate + ADP. Its pathway is amino-acid biosynthesis; L-proline biosynthesis; L-glutamate 5-semialdehyde from L-glutamate: step 1/2. Catalyzes the transfer of a phosphate group to glutamate to form L-glutamate 5-phosphate. In Burkholderia orbicola (strain MC0-3), this protein is Glutamate 5-kinase.